The sequence spans 897 residues: High molecular weight rhoptry protein 3 (897 aa).

A signal peptide spans methionine 1–glycine 24. 5 disulfide bridges follow: cysteine 157/cysteine 231, cysteine 244/cysteine 253, cysteine 262/cysteine 276, cysteine 421/cysteine 620, and cysteine 475/cysteine 536. A helical membrane pass occupies residues phenylalanine 597 to tyrosine 615. Disordered regions lie at residues lysine 788–lysine 845 and glutamine 859–leucine 897. Residues lysine 792–aspartate 801 are compositionally biased toward polar residues. The span at glutamate 802 to glycine 817 shows a compositional bias: low complexity. A Phosphoserine; by CDPK1 modification is found at serine 804. The span at glycine 820–methionine 832 shows a compositional bias: basic and acidic residues. The segment covering proline 865–arginine 876 has biased composition (basic residues). A compositionally biased stretch (basic and acidic residues) spans aspartate 877–lysine 889.

As to quaternary structure, component of the RhopH complex. RhopH complex is composed of CLAG3.1/CLAG3.2, RhopH2 and RhopH3 with a 1:1:1 subunit stoichiometry. Interacts with CLAG3.1/CLAG3.2. Interacts with CDPK1; the interaction promotes RhopH3 phosphorylation in merozoites. In terms of processing, proteolytically cleaved near C-terminus.

Its subcellular location is the host cell membrane. It is found in the parasitophorous vacuole membrane. The protein localises to the cytoplasm. It localises to the cytoplasmic vesicle. The protein resides in the secretory vesicle. Its subcellular location is the rhoptry. Functionally, participates in the formation of new permeability pathways in Plasmodium-infected erythrocytes enabling the uptake of nutrients from the blood plasma. Required for maintaining invasion capacity of merozoites. Required for the trophozoite to schizont developmental transition of the intracellular parasite. This chain is High molecular weight rhoptry protein 3, found in Plasmodium falciparum (isolate 3D7).